The sequence spans 111 residues: Holo-[acyl-carrier-protein] synthase (111 aa).

Residues Asp8 and Glu57 each contribute to the Mg(2+) site.

The protein belongs to the P-Pant transferase superfamily. AcpS family. Mg(2+) serves as cofactor.

It is found in the cytoplasm. It carries out the reaction apo-[ACP] + CoA = holo-[ACP] + adenosine 3',5'-bisphosphate + H(+). Its function is as follows. Transfers the 4'-phosphopantetheine moiety from coenzyme A to a Ser of acyl-carrier-protein. The protein is Holo-[acyl-carrier-protein] synthase of Mycoplasmoides gallisepticum (strain R(low / passage 15 / clone 2)) (Mycoplasma gallisepticum).